We begin with the raw amino-acid sequence, 258 residues long: Elongation factor Ts (258 aa).

Residues 81–84 (TDFV) form an involved in Mg(2+) ion dislocation from EF-Tu region. Residues 216 to 258 (GLKPAEAPKVEETPPAPPEEPAPEPAPAAESKPAKKGSAKKKK) are disordered. Residues 229-241 (PPAPPEEPAPEPA) show a composition bias toward pro residues. Residues 249–258 (AKKGSAKKKK) are compositionally biased toward basic residues.

The protein belongs to the EF-Ts family.

The protein resides in the cytoplasm. Associates with the EF-Tu.GDP complex and induces the exchange of GDP to GTP. It remains bound to the aminoacyl-tRNA.EF-Tu.GTP complex up to the GTP hydrolysis stage on the ribosome. The chain is Elongation factor Ts from Synechococcus sp. (strain JA-2-3B'a(2-13)) (Cyanobacteria bacterium Yellowstone B-Prime).